A 262-amino-acid polypeptide reads, in one-letter code: Protein NEGATIVE GRAVITROPIC RESPONSE OF ROOTS (262 aa).

Residues 1-40 (MKFFNWMQNKLGGKQENRKSNTSTSTTYAKPEPREEFSDW) are disordered. Positions 43-49 (SLLAIGT) match the IGT motif motif.

The protein belongs to the LAZY family.

In terms of biological role, involved in the control of root gravitropism. The chain is Protein NEGATIVE GRAVITROPIC RESPONSE OF ROOTS from Medicago truncatula (Barrel medic).